The primary structure comprises 333 residues: Extracellular globin (333 aa).

An N-terminal signal peptide occupies residues 1–18 (MHSSIVLAIVLFVAIASA). Globin domains lie at 25-167 (CMKS…HHGR) and 174-318 (CMNS…KHAK). 2 residues coordinate heme b: glutamine 82 and histidine 114. An N-linked (GlcNAc...) asparagine glycan is attached at asparagine 216. The heme b site is built by glutamine 231 and histidine 263. The interval 314-333 (DKHAKAEKDHHEGEHKEEHH) is disordered.

It belongs to the globin family. In terms of assembly, homooctamer.

The protein localises to the secreted. It localises to the extracellular space. The polypeptide is Extracellular globin (Pseudoterranova decipiens (Sealworm)).